The primary structure comprises 528 residues: Chaperonin GroEL, chloroplastic (528 aa).

ATP is bound by residues threonine 29–proline 32, aspartate 86–threonine 90, glycine 414, and aspartate 496.

This sequence belongs to the chaperonin (HSP60) family. In terms of assembly, forms a cylinder of 14 subunits composed of two heptameric rings stacked back-to-back. Interacts with the co-chaperonin GroES.

The protein resides in the plastid. Its subcellular location is the chloroplast. The catalysed reaction is ATP + H2O + a folded polypeptide = ADP + phosphate + an unfolded polypeptide.. Its function is as follows. Together with its co-chaperonin GroES, plays an essential role in assisting protein folding. The GroEL-GroES system forms a nano-cage that allows encapsulation of the non-native substrate proteins and provides a physical environment optimized to promote and accelerate protein folding. The protein is Chaperonin GroEL, chloroplastic of Gracilaria tenuistipitata var. liui (Red alga).